The chain runs to 195 residues: Imidazoleglycerol-phosphate dehydratase (195 aa).

Belongs to the imidazoleglycerol-phosphate dehydratase family.

It is found in the cytoplasm. The catalysed reaction is D-erythro-1-(imidazol-4-yl)glycerol 3-phosphate = 3-(imidazol-4-yl)-2-oxopropyl phosphate + H2O. Its pathway is amino-acid biosynthesis; L-histidine biosynthesis; L-histidine from 5-phospho-alpha-D-ribose 1-diphosphate: step 6/9. In Desulfosudis oleivorans (strain DSM 6200 / JCM 39069 / Hxd3) (Desulfococcus oleovorans), this protein is Imidazoleglycerol-phosphate dehydratase.